The chain runs to 61 residues: Cecropin-D (61 aa).

Positions 1–22 (MKFSKIFVFVFAIVFATASVSA) are cleaved as a signal peptide. Residues 23-24 (AP) constitute a propeptide, removed by a dipeptidylpeptidase. Position 60 is a glutamine amide (Gln60).

This sequence belongs to the cecropin family. As to expression, mainly in fat body. Lower in hemocytes. Not expressed in midguts, malpighian tubules and silk glands.

It localises to the secreted. Its function is as follows. Cecropins have lytic and antibacterial activity against several Gram-positive and Gram-negative bacteria. The sequence is that of Cecropin-D (CECD) from Bombyx mori (Silk moth).